The following is a 175-amino-acid chain: Ribosome maturation factor RimM (175 aa).

In terms of domain architecture, PRC barrel spans Glu-96–Phe-175.

It belongs to the RimM family. Binds ribosomal protein uS19.

It is found in the cytoplasm. Functionally, an accessory protein needed during the final step in the assembly of 30S ribosomal subunit, possibly for assembly of the head region. Essential for efficient processing of 16S rRNA. May be needed both before and after RbfA during the maturation of 16S rRNA. It has affinity for free ribosomal 30S subunits but not for 70S ribosomes. This Psychromonas ingrahamii (strain DSM 17664 / CCUG 51855 / 37) protein is Ribosome maturation factor RimM.